Here is a 122-residue protein sequence, read N- to C-terminus: Basic phospholipase A2 CbII (122 aa).

7 disulfide bridges follow: cysteine 26-cysteine 115, cysteine 28-cysteine 44, cysteine 43-cysteine 95, cysteine 49-cysteine 122, cysteine 50-cysteine 88, cysteine 57-cysteine 81, and cysteine 75-cysteine 86. Residues tyrosine 27, glycine 29, and glycine 31 each coordinate Ca(2+). Histidine 47 is a catalytic residue. Ca(2+) is bound at residue aspartate 48. The active site involves aspartate 89.

Belongs to the phospholipase A2 family. Group I subfamily. D49 sub-subfamily. Heterodimer of an acidic subunit (CbIalpha or CbIbeta) and a basic subunit (CbII). The acidic subunit is non-toxic, and increases the toxicity of the basic subunit. It depends on Ca(2+) as a cofactor. In terms of tissue distribution, expressed by the venom gland.

The protein resides in the secreted. It carries out the reaction a 1,2-diacyl-sn-glycero-3-phosphocholine + H2O = a 1-acyl-sn-glycero-3-phosphocholine + a fatty acid + H(+). In terms of biological role, heterodimer: presynaptic neurotoxin. Functionally, monomer: Snake venom phospholipase A2 (PLA2) that exhibits strong anticoagulant effects by binding to factor Xa (F10) and inhibiting the prothrombinase activity (IC(50) is 20 nM). PLA2 catalyzes the calcium-dependent hydrolysis of the 2-acyl groups in 3-sn-phosphoglycerides. The sequence is that of Basic phospholipase A2 CbII from Pseudocerastes fieldi (Field's horned viper).